Consider the following 447-residue polypeptide: tRNA threonylcarbamoyladenosine dehydratase 2 (447 aa).

3 helical membrane-spanning segments follow: residues 9–29 (LITA…YAWT), 86–106 (NQYV…NSLV), and 294–314 (ILPV…TWIL).

The protein belongs to the HesA/MoeB/ThiF family.

It is found in the mitochondrion outer membrane. Its function is as follows. Catalyzes the ATP-dependent dehydration of threonylcarbamoyladenosine at position 37 (t(6)A37) to form cyclic t(6)A37 (ct(6)A37) in tRNAs that read codons beginning with adenine. The sequence is that of tRNA threonylcarbamoyladenosine dehydratase 2 (TCD2) from Saccharomyces cerevisiae (strain ATCC 204508 / S288c) (Baker's yeast).